The sequence spans 4963 residues: Kettin homolog (4963 aa).

3 Ig-like domains span residues 18–105, 133–220, and 303–392; these read PTFI…TCIL, PSAP…EAIS, and PIIR…ARIE. Disordered regions lie at residues 396 to 420, 466 to 501, 557 to 578, 598 to 622, and 652 to 696; these read LSVPDERRKENQLREQQERDRQQQQ, RRQLEHEKRLRQQQQQQLFEREKSEKEERARLEEER, IRPHQQQQQHYQQQQQSPRQEV, QLYQHQHQQHQQQQQQPQEQQQQRF, and TNGG…GHEH. Basic and acidic residues-rich tracts occupy residues 399-417, 466-475, and 484-501; these read PDERRKENQLREQQERDRQ, RRQLEHEKRL, and FEREKSEKEERARLEEER. Residues 401–517 adopt a coiled-coil conformation; it reads ERRKENQLRE…KHLRQQQQTQ (117 aa). Residues 557–576 show a composition bias toward low complexity; the sequence is IRPHQQQQQHYQQQQQSPRQ. Positions 658–685 are enriched in low complexity; that stretch reads AANGSAKTANGSANGSANGSAVHAANGG. Ig-like domains are found at residues 706 to 796, 806 to 893, 937 to 1027, 1065 to 1155, 1199 to 1281, 1462 to 1554, 1594 to 1687, 1728 to 1819, 1992 to 2085, 2126 to 2217, 2258 to 2350, 2391 to 2481, 2522 to 2613, 2654 to 2745, 2787 to 2878, 2919 to 3010, 3051 to 3141, 3182 to 3273, 3314 to 3407, and 3448 to 3539; these read PQFL…FSLN, PEFT…GRVV, PKFE…ANIA, PNFH…ATII, FHCE…AELT, PKFL…ITVT, PPTF…ATIR, PAFV…VDIN, PPVF…IFLE, PTFT…CTVK, PKFV…ANFT, PQFI…AQLT, PKFV…GQLS, PSFV…ANVG, PQWV…ATVT, PNFL…ASIR, PAIT…ATLK, PRFI…ATIE, PAIV…FEVS, and PVFI…TKLT. Residues Cys-827 and Cys-877 are joined by a disulfide bond. Residues Cys-1201 and Cys-1265 are joined by a disulfide bond. Cys-1618 and Cys-1671 are oxidised to a cystine. 2 cysteine pairs are disulfide-bonded: Cys-2016–Cys-2069 and Cys-2148–Cys-2201. The segment covering 3567-3583 has biased composition (basic and acidic residues); it reads EAPRPAREDAPDADHGP. Residues 3567–3590 form a disordered region; it reads EAPRPAREDAPDADHGPPKFTSAL. 5 consecutive Ig-like domains span residues 3584–3677, 3720–3811, 3821–3913, 3962–4052, and 4098–4185; these read PKFT…LKVV, PSFS…GKIA, PQVV…TKIT, PEFR…AKLA, and PQFT…ATLD. Intrachain disulfides connect Cys-3606-Cys-3659 and Cys-3742-Cys-3795. The interval 4193–4963 is required for F-actin binding; it reads RQTKLRPANF…TSQAKLTLSR (771 aa). Residues 4319 to 4329 show a composition bias toward basic and acidic residues; sequence DQQEVGWERPD. Positions 4319 to 4357 are disordered; it reads DQQEVGWERPDWAGQDGTSKLPGADEGRFKKLPTPAPEL. 4 consecutive Ig-like domains span residues 4546–4634, 4645–4733, 4752–4842, and 4872–4960; these read PTIS…ANLT, PDFS…ARLN, PRFT…LVLT, and PHFI…AKLT.

In terms of assembly, interacts (via Ig-like domains) with F-actin. As to expression, expressed in the pharyngeal, body wall, and anal depressor muscles. Expression in these muscles is higher in hermaphrodites than in males. Expressed in the vulva and the myoepithelial sheath of the proximal ovary. Expressed in the proximal gonad of males. Not expressed in the dense bodies of the obliquely striated body wall muscle.

It localises to the cytoplasm. Its subcellular location is the myofibril. The protein resides in the sarcomere. It is found in the cytoskeleton. Its function is as follows. Positively regulates actin filament organization and provides mechanical stability to the myofibrils during body wall muscle contraction. Required for the organization of sarcomeric actin filaments and myosin protein myo-3 in striated body wall muscle cells. Not required for assembly of dense bodies, which are a type of integrin-based adhesion structure that link the plasma membrane to thin filaments of myofibrils, in body wall muscle. Not required for the atn-1 protein to localize to the dense bodies. The sequence is that of Kettin homolog from Caenorhabditis elegans.